The following is a 129-amino-acid chain: Protein FYV12 (129 aa).

Asparagine 91 carries N-linked (GlcNAc...) asparagine glycosylation. The chain crosses the membrane as a helical span at residues 109–128; sequence LMTTFLLYVLYVCIYISAFI.

Its subcellular location is the membrane. In terms of biological role, involved in K1 killer toxin resistance. The chain is Protein FYV12 (FYV12) from Saccharomyces cerevisiae (strain ATCC 204508 / S288c) (Baker's yeast).